The chain runs to 331 residues: Phosphoribosylformylglycinamidine cyclo-ligase (331 aa).

The protein belongs to the AIR synthase family.

The protein resides in the cytoplasm. It catalyses the reaction 2-formamido-N(1)-(5-O-phospho-beta-D-ribosyl)acetamidine + ATP = 5-amino-1-(5-phospho-beta-D-ribosyl)imidazole + ADP + phosphate + H(+). It functions in the pathway purine metabolism; IMP biosynthesis via de novo pathway; 5-amino-1-(5-phospho-D-ribosyl)imidazole from N(2)-formyl-N(1)-(5-phospho-D-ribosyl)glycinamide: step 2/2. The protein is Phosphoribosylformylglycinamidine cyclo-ligase of Clostridium botulinum (strain Okra / Type B1).